A 205-amino-acid chain; its full sequence is N-(5'-phosphoribosyl)anthranilate isomerase (205 aa).

It belongs to the TrpF family.

It carries out the reaction N-(5-phospho-beta-D-ribosyl)anthranilate = 1-(2-carboxyphenylamino)-1-deoxy-D-ribulose 5-phosphate. The protein operates within amino-acid biosynthesis; L-tryptophan biosynthesis; L-tryptophan from chorismate: step 3/5. The sequence is that of N-(5'-phosphoribosyl)anthranilate isomerase from Clostridium acetobutylicum (strain ATCC 824 / DSM 792 / JCM 1419 / IAM 19013 / LMG 5710 / NBRC 13948 / NRRL B-527 / VKM B-1787 / 2291 / W).